A 141-amino-acid chain; its full sequence is Nucleoside diphosphate kinase (141 aa).

Residues K11, F59, R87, T93, R104, and N114 each coordinate ATP. The active-site Pros-phosphohistidine intermediate is H117.

This sequence belongs to the NDK family. As to quaternary structure, homotetramer. It depends on Mg(2+) as a cofactor.

It is found in the cytoplasm. The enzyme catalyses a 2'-deoxyribonucleoside 5'-diphosphate + ATP = a 2'-deoxyribonucleoside 5'-triphosphate + ADP. It catalyses the reaction a ribonucleoside 5'-diphosphate + ATP = a ribonucleoside 5'-triphosphate + ADP. Functionally, major role in the synthesis of nucleoside triphosphates other than ATP. The ATP gamma phosphate is transferred to the NDP beta phosphate via a ping-pong mechanism, using a phosphorylated active-site intermediate. This is Nucleoside diphosphate kinase from Teredinibacter turnerae (strain ATCC 39867 / T7901).